Reading from the N-terminus, the 470-residue chain is Uronate isomerase (470 aa).

The protein belongs to the metallo-dependent hydrolases superfamily. Uronate isomerase family.

The enzyme catalyses D-glucuronate = D-fructuronate. It catalyses the reaction aldehydo-D-galacturonate = keto-D-tagaturonate. It functions in the pathway carbohydrate metabolism; pentose and glucuronate interconversion. The chain is Uronate isomerase from Salmonella agona (strain SL483).